A 368-amino-acid chain; its full sequence is Ribosomal RNA large subunit methyltransferase M (368 aa).

S-adenosyl-L-methionine is bound by residues serine 189, 222–225, aspartate 241, aspartate 261, and aspartate 278; that span reads CPGG. Residue lysine 307 is the Proton acceptor of the active site.

It belongs to the class I-like SAM-binding methyltransferase superfamily. RNA methyltransferase RlmE family. RlmM subfamily. As to quaternary structure, monomer.

It is found in the cytoplasm. The catalysed reaction is cytidine(2498) in 23S rRNA + S-adenosyl-L-methionine = 2'-O-methylcytidine(2498) in 23S rRNA + S-adenosyl-L-homocysteine + H(+). Its function is as follows. Catalyzes the 2'-O-methylation at nucleotide C2498 in 23S rRNA. This is Ribosomal RNA large subunit methyltransferase M from Yersinia pestis bv. Antiqua (strain Angola).